The sequence spans 250 residues: Probable aquaporin TIP-type (250 aa).

Helical transmembrane passes span 22–42 (AGLAEFISTFIFVFAGSGSGI) and 56–76 (AGLISASIAHAFALFVAVSVG). Positions 85–87 (NPA) match the NPA 1 motif. Helical transmembrane passes span 104-124 (IVYIIAQLLGSIVASALLVFV), 138-158 (VGVGPALVLEIVMTFGLVYTV), and 170-190 (IGIIAPIAIGFIVGANILVGG). An NPA 2 motif is present at residues 198–200 (NPA). A helical membrane pass occupies residues 218-238 (YWAGPLIGGGIAGLVYEVLFI).

This sequence belongs to the MIP/aquaporin (TC 1.A.8) family. TIP (TC 1.A.8.10) subfamily.

The protein localises to the membrane. Functionally, aquaporins facilitate the transport of water and small neutral solutes across cell membranes. May have a role in buffering osmotic fluctations in the highly compartmented vacuole of arbuscule cells. This chain is Probable aquaporin TIP-type (AQP1), found in Medicago truncatula (Barrel medic).